We begin with the raw amino-acid sequence, 353 residues long: Photosystem II protein D1 (353 aa).

An N-acetylthreonine modification is found at T2. T2 carries the phosphothreonine modification. The next 3 membrane-spanning stretches (helical) occupy residues 29-46 (YIGW…TATS), 118-133 (HFFI…EWEL), and 142-156 (WIAV…AATA). H118 contributes to the chlorophyll a binding site. Y126 contacts pheophytin a. Residues D170 and E189 each contribute to the [CaMn4O5] cluster site. A helical transmembrane segment spans residues 197–218 (FHMLGVAGVFGGSLFSAMHGSL). A chlorophyll a-binding site is contributed by H198. Residues H215 and 264 to 265 (SF) each bind a quinone. H215 lines the Fe cation pocket. H272 lines the Fe cation pocket. Residues 274 to 288 (FLAAWPVIGIWFTAL) traverse the membrane as a helical segment. Residues H332, E333, D342, and A344 each contribute to the [CaMn4O5] cluster site. Positions 345–353 (AFEAPSINA) are excised as a propeptide.

It belongs to the reaction center PufL/M/PsbA/D family. As to quaternary structure, PSII is composed of 1 copy each of membrane proteins PsbA, PsbB, PsbC, PsbD, PsbE, PsbF, PsbH, PsbI, PsbJ, PsbK, PsbL, PsbM, PsbT, PsbX, PsbY, PsbZ, Psb30/Ycf12, at least 3 peripheral proteins of the oxygen-evolving complex and a large number of cofactors. It forms dimeric complexes. It depends on The D1/D2 heterodimer binds P680, chlorophylls that are the primary electron donor of PSII, and subsequent electron acceptors. It shares a non-heme iron and each subunit binds pheophytin, quinone, additional chlorophylls, carotenoids and lipids. D1 provides most of the ligands for the Mn4-Ca-O5 cluster of the oxygen-evolving complex (OEC). There is also a Cl(-1) ion associated with D1 and D2, which is required for oxygen evolution. The PSII complex binds additional chlorophylls, carotenoids and specific lipids. as a cofactor. Post-translationally, tyr-161 forms a radical intermediate that is referred to as redox-active TyrZ, YZ or Y-Z. C-terminally processed by CTPA; processing is essential to allow assembly of the oxygen-evolving complex and thus photosynthetic growth.

It is found in the plastid. Its subcellular location is the chloroplast thylakoid membrane. The catalysed reaction is 2 a plastoquinone + 4 hnu + 2 H2O = 2 a plastoquinol + O2. Functionally, photosystem II (PSII) is a light-driven water:plastoquinone oxidoreductase that uses light energy to abstract electrons from H(2)O, generating O(2) and a proton gradient subsequently used for ATP formation. It consists of a core antenna complex that captures photons, and an electron transfer chain that converts photonic excitation into a charge separation. The D1/D2 (PsbA/PsbD) reaction center heterodimer binds P680, the primary electron donor of PSII as well as several subsequent electron acceptors. This Chlamydomonas moewusii (Chlamydomonas eugametos) protein is Photosystem II protein D1.